The sequence spans 79 residues: MSFEVFEKLEVKVQQAIDTITLLQMEIEELKEKNNTLTQEVQDAAGSREALVRENEQLKQEQHVWQDRLRALLGKMEEV.

Positions 6–78 (FEKLEVKVQQ…LRALLGKMEE (73 aa)) form a coiled coil.

Belongs to the ZapB family. In terms of assembly, homodimer. The ends of the coiled-coil dimer bind to each other, forming polymers. Interacts with FtsZ.

The protein resides in the cytoplasm. Its function is as follows. Non-essential, abundant cell division factor that is required for proper Z-ring formation. It is recruited early to the divisome by direct interaction with FtsZ, stimulating Z-ring assembly and thereby promoting cell division earlier in the cell cycle. Its recruitment to the Z-ring requires functional FtsA or ZipA. The sequence is that of Cell division protein ZapB from Yersinia pseudotuberculosis serotype O:1b (strain IP 31758).